Consider the following 146-residue polypeptide: Hemoglobin subunit beta (146 aa).

V1 is subject to N-acetylvaline. One can recognise a Globin domain in the interval 2–146 (HLTPEEKALV…VANALAHKYH (145 aa)). K59 bears the N6-acetyllysine mark. H63 is a heme b binding site. K82 carries the post-translational modification N6-acetyllysine. H92 serves as a coordination point for heme b. C93 is modified (S-nitrosocysteine). Position 144 is an N6-acetyllysine (K144).

The protein belongs to the globin family. In terms of assembly, heterotetramer of two alpha chains and two beta chains. As to expression, red blood cells.

Functionally, involved in oxygen transport from the lung to the various peripheral tissues. The sequence is that of Hemoglobin subunit beta (HBB) from Trichechus inunguis (Amazon manatee).